A 545-amino-acid chain; its full sequence is Cannabidiolic acid synthase-like 1 (545 aa).

An N-terminal signal peptide occupies residues 1-28; it reads MKCSTFCFWYVCKIIFFFLSFNIQISIA. A disulfide bridge connects residues Cys37 and Cys99. 4 N-linked (GlcNAc...) asparagine glycosylation sites follow: Asn45, Asn65, Asn89, and Asn168. The region spanning 77-251 is the FAD-binding PCMH-type domain; it reads TTPKPLVIIT…AAWKIRLVAV (175 aa). Positions 114 to 176 form a cross-link, 6-(S-cysteinyl)-8alpha-(pros-histidyl)-FAD (His-Cys); the sequence is HDAEGMSYIS…ENLSFPAGYC (63 aa). His292 serves as a coordination point for substrate. N-linked (GlcNAc...) asparagine glycosylation is found at Asn297, Asn305, Asn329, and Asn361. Tyr417 is a substrate binding site. Residue Asn467 is glycosylated (N-linked (GlcNAc...) asparagine). Tyr484 functions as the Proton acceptor in the catalytic mechanism. N-linked (GlcNAc...) asparagine glycosylation occurs at Asn499.

The protein belongs to the oxygen-dependent FAD-linked oxidoreductase family. FAD serves as cofactor. In terms of processing, the FAD cofactor is bound via a bicovalent 6-S-cysteinyl, 8alpha-N1-histidyl FAD linkage.

It is found in the secreted. Its function is as follows. Has no cannabidiolic acid synthase activity. The chain is Cannabidiolic acid synthase-like 1 (CBDAS2) from Cannabis sativa (Hemp).